Reading from the N-terminus, the 802-residue chain is Cullin-4 (802 aa).

2 stretches are compositionally biased toward low complexity: residues 1–33 (MNFN…NNNN) and 656–676 (STSS…ASGS). Disordered stretches follow at residues 1 to 43 (MNFN…SLAG) and 656 to 686 (STSS…GGAT). The Cullin neddylation domain maps to 734–794 (DRQYQVDAAI…KEYLCRDPEN (61 aa)). A Glycyl lysine isopeptide (Lys-Gly) (interchain with G-Cter in NEDD8) cross-link involves residue Lys-748.

This sequence belongs to the cullin family. In terms of processing, neddylated. Deneddylated via its interaction with the COP9 signalosome (CSN) complex.

It functions in the pathway protein modification; protein ubiquitination. Its function is as follows. Probable core component of cullin-based SCF-like E3 ubiquitin-protein ligase complexes which mediate the ubiquitination and subsequent proteasomal degradation of target proteins. The E3 ubiquitin-protein ligase activity of the complex is dependent on the neddylation of the cullin subunit. The sequence is that of Cullin-4 (culD) from Dictyostelium discoideum (Social amoeba).